Reading from the N-terminus, the 795-residue chain is Phenylalanine--tRNA ligase beta subunit (795 aa).

Positions 39–148 (AGTFNGVKVG…IDAPIGMDFR (110 aa)) constitute a tRNA-binding domain. The B5 domain maps to 401 to 476 (PKPNKVALRR…RIYGYDNIPN (76 aa)). Residues Asp-454, Asp-460, Glu-463, and Glu-464 each contribute to the Mg(2+) site. The FDX-ACB domain maps to 701–794 (SKFPANRRDI…VSEKFGASLR (94 aa)).

The protein belongs to the phenylalanyl-tRNA synthetase beta subunit family. Type 1 subfamily. Tetramer of two alpha and two beta subunits. It depends on Mg(2+) as a cofactor.

It is found in the cytoplasm. It carries out the reaction tRNA(Phe) + L-phenylalanine + ATP = L-phenylalanyl-tRNA(Phe) + AMP + diphosphate + H(+). The polypeptide is Phenylalanine--tRNA ligase beta subunit (Vibrio vulnificus (strain YJ016)).